A 124-amino-acid chain; its full sequence is Small ribosomal subunit protein uS12 (124 aa).

Aspartate 89 bears the 3-methylthioaspartic acid mark. Residues 104-124 (TAGVENRKQSRSKYGAKRPKK) are disordered. The segment covering 112–124 (QSRSKYGAKRPKK) has biased composition (basic residues).

It belongs to the universal ribosomal protein uS12 family. In terms of assembly, part of the 30S ribosomal subunit. Contacts proteins S8 and S17. May interact with IF1 in the 30S initiation complex.

Functionally, with S4 and S5 plays an important role in translational accuracy. Its function is as follows. Interacts with and stabilizes bases of the 16S rRNA that are involved in tRNA selection in the A site and with the mRNA backbone. Located at the interface of the 30S and 50S subunits, it traverses the body of the 30S subunit contacting proteins on the other side and probably holding the rRNA structure together. The combined cluster of proteins S8, S12 and S17 appears to hold together the shoulder and platform of the 30S subunit. This chain is Small ribosomal subunit protein uS12, found in Pseudothermotoga lettingae (strain ATCC BAA-301 / DSM 14385 / NBRC 107922 / TMO) (Thermotoga lettingae).